The primary structure comprises 573 residues: Protein DSE1 (573 aa).

WD repeat units follow at residues 144 to 185 (DFPP…GCAK), 315 to 351 (RKNTSLDCVWISNHHVAQSLNDKIQIWDIQSCDGKPV), 356 to 395 (AKKGYIESLKFNENTGALYSSDDQGFVICWDLQNLQNMKY), and 397 to 448 (ELVH…NGKG). The segment covering 500–509 (SDSSMLSLSN) has biased composition (low complexity). The tract at residues 500–519 (SDSSMLSLSNESDHSMTETS) is disordered. Residue lysine 553 forms a Glycyl lysine isopeptide (Lys-Gly) (interchain with G-Cter in ubiquitin) linkage.

This sequence belongs to the WD repeat DSE1 family.

The protein resides in the bud neck. Its function is as follows. Involved in cell wall metabolism and required for the separation of the mother and daughter cells. The chain is Protein DSE1 (DSE1) from Saccharomyces cerevisiae (strain ATCC 204508 / S288c) (Baker's yeast).